Here is a 418-residue protein sequence, read N- to C-terminus: MLLHESAASMEQSMPENLSTHMYGECEVNPTLAKCPDPVNVDHELPTKESCASTTIVSTSPTSATSTTKVKLSFSVDRLLGSEPEESHRQSSSSPSTKSCCDGSILACCSFPHCFSQANAESRRFGHATLPPTFTPTSSHTYPFVGLDKLFPGPYMDYKSVLRPTPIRAAEHAAPTYPTLATNALLRFHQHQKQQHQQHHHHQHHPKHLHQQHKPPPHNSTTASALLAPLHSLTSLQLTQQQQRFLGKTPQQLLDIAPTSPAAAAAATSQNGAHGHGGGNGQGNASAGSNGKRKRSWSRAVFSNLQRKGLEIQFQQQKYITKPDRRKLAARLNLTDAQVKVWFQNRRMKWRHTRENLKSGQEKQPSAVPESGGVFKTSTPSGDGTPQEALDYSSDSCSSVDLSEQADEDDNIEINVVE.

Basic residues predominate over residues 190–216 (QHQKQQHQQHHHHQHHPKHLHQQHKPP). Disordered regions lie at residues 190-223 (QHQK…STTA), 259-296 (TSPA…RKRS), and 354-418 (RENL…NVVE). Residues 259–273 (TSPAAAAAATSQNGA) show a composition bias toward low complexity. The homeobox DNA-binding region spans 295–354 (RSWSRAVFSNLQRKGLEIQFQQQKYITKPDRRKLAARLNLTDAQVKVWFQNRRMKWRHTR). Residues 391-403 (DYSSDSCSSVDLS) are compositionally biased toward low complexity.

Belongs to the H2.0 homeobox family. As to expression, expressed in cells of the visceral musculature and its anlagen.

Its subcellular location is the nucleus. In terms of biological role, may play a role in pattern formation during embryonic and imaginal development. Is not essential for visceral muscle morphogenesis. The chain is Homeobox protein H2.0 (H2.0) from Drosophila melanogaster (Fruit fly).